Consider the following 714-residue polypeptide: MDSSLDGAAGDSSKCSEMSVDEKRQLVYELSKQSHLAAEVLQAWSRQEILQILCAEMGKERKYTGLTKVKIIETLLKIVSEKNSGECEGKKRDSDCLPIQRNTKRQRKVDNPSRYVIPATNIVTSNNASGSCSSVNTKGESTTIYCKNLACRAVLRQEDSFCRRCSCCICRKYDDNKDPSLWLTCSSDPPFEGESCGFSCHLECAFNTEKSGLGKDKQSEGCCFYCVSCGKANSLLECWKKQLTIAKETRRVEVLCYRLFLVQKLLKSSTKYRNLCEVVDEAVKTLEADVGPLTGLPMKMGRGIVNRLHSGPDVQKLCSSALESLETIATTPPDVAALPSPRSSKMQQDCSYVLSNEISADTATTGSTKIRFEDVNATSLTVVLASNEIPSPPNIVHYSIWHRKVPEKDYPEKSTCTLFIPNTRFVVSGLAPASEYCFKVVSYSGTREMGVDEINVLTRSAEEGANCSSAVERSVSPLTNCSTLSSNPSSVEAESNNDYIVPKKPSSKNEDNNSPSVDESAAKRMKRTTDSDIVQIEKDVEQIVLLDDEEQEAVLDKTESETPVVVTTKSLVGNRNSSDASLPITPFRSDEIKNRQARIEISMKDNCNNGDHSANGGTESGLEHCVKIIRQLECSGHIDKNFRQKFLTWYSLRATSQEIRVVKIFIDTFIDDPMALAEQLIDTFDDRVSIKRSAVGGSGASAVVPSGFCMKLWH.

Residues 164 to 232 (RCSCCICRKY…CFYCVSCGKA (69 aa)) form a PHD-type zinc finger. The Nuclear localization signal motif lies at 239 to 246 (WKKQLTIA). A Fibronectin type-III domain is found at 366–463 (GSTKIRFEDV…INVLTRSAEE (98 aa)). A compositionally biased stretch (polar residues) spans 478–498 (LTNCSTLSSNPSSVEAESNND). Residues 478–530 (LTNCSTLSSNPSSVEAESNNDYIVPKKPSSKNEDNNSPSVDESAAKRMKRTTD) are disordered. Residues 602–714 (SMKDNCNNGD…PSGFCMKLWH (113 aa)) are VIN3-Interacting Domain (VID).

As to quaternary structure, self-interacts. Interacts with VIN3 and VIL1. Component of the plant homeodomain / polycomb repressive complex 2 (PHD-PRC2) large complex during prolonged cold, composed of core PRC2 components (VRN2, EZA1, FIE and MSI1), and three related PHD finger proteins (VIL1, VIL2 and VIN3) that mediates histone H3 trimethylation on 'Lys-27' (H3K27me3).

It localises to the nucleus. Its function is as follows. Maybe involved in both the vernalization and photoperiod pathways by regulating gene expression. Binds preferentially to dimethylated histone H3 'Lys-9' (H3K9me2). Promotes flowering in non-inductive photoperiods (e.g. short days) through the maintenance of the epigenetically repressed state of MAF5 via H3K9me2 and plant homeodomain / polycomb repressive complex 2 (PHD-PRC2)-dependent H3K27me3. This Arabidopsis thaliana (Mouse-ear cress) protein is VIN3-like protein 2 (VIL2).